We begin with the raw amino-acid sequence, 272 residues long: MEWNYLYNHFDPVAFDLWGLKVHWYGIAYVLALLVALWVAKWIAKKDAYPLSNEQLESYFIWVEVGVILGARLGYILFYDPFTAYYLTHPWQIFNPFQNGEFIGIRGMSYHGAVIGFLIASFLFAQRHGVKFWMLMDLVGISVPLGYVFGRIGNFLNQELIGRVTEVPWGIYVAGVLRHPSQLYEAFLEGIVLFVILYAWRSRVKFTGQLGIMYLILYALARFVAEFWREPDAQIGYLVGGVTMGQLLSLAMAIPCLVLWGYLAKKERGKIL.

4 consecutive transmembrane segments (helical) span residues 24–44 (WYGIAYVLALLVALWVAKWIA), 59–79 (YFIWVEVGVILGARLGYILFY), 102–122 (FIGIRGMSYHGAVIGFLIASF), and 129–149 (GVKFWMLMDLVGISVPLGYVF). Arginine 151 lines the a 1,2-diacyl-sn-glycero-3-phospho-(1'-sn-glycerol) pocket. The next 3 membrane-spanning stretches (helical) occupy residues 180-200 (PSQLYEAFLEGIVLFVILYAW), 208-228 (GQLGIMYLILYALARFVAEFW), and 244-264 (MGQLLSLAMAIPCLVLWGYLA).

This sequence belongs to the Lgt family.

Its subcellular location is the cell inner membrane. The enzyme catalyses L-cysteinyl-[prolipoprotein] + a 1,2-diacyl-sn-glycero-3-phospho-(1'-sn-glycerol) = an S-1,2-diacyl-sn-glyceryl-L-cysteinyl-[prolipoprotein] + sn-glycerol 1-phosphate + H(+). Its pathway is protein modification; lipoprotein biosynthesis (diacylglyceryl transfer). In terms of biological role, catalyzes the transfer of the diacylglyceryl group from phosphatidylglycerol to the sulfhydryl group of the N-terminal cysteine of a prolipoprotein, the first step in the formation of mature lipoproteins. This is Phosphatidylglycerol--prolipoprotein diacylglyceryl transferase from Wolinella succinogenes (strain ATCC 29543 / DSM 1740 / CCUG 13145 / JCM 31913 / LMG 7466 / NCTC 11488 / FDC 602W) (Vibrio succinogenes).